The sequence spans 468 residues: Argininosuccinate synthase (468 aa).

ATP is bound by residues 10–18 (AYSGGLDTS) and alanine 37. L-citrulline contacts are provided by tyrosine 90 and serine 95. Glycine 120 provides a ligand contact to ATP. 3 residues coordinate L-aspartate: threonine 122, asparagine 126, and aspartate 127. Residue asparagine 126 coordinates L-citrulline. L-citrulline-binding residues include arginine 130, serine 182, serine 191, glutamate 267, and tyrosine 279. A compositionally biased stretch (low complexity) spans 445 to 457 (PVAAKATAKPVKA). Residues 445–468 (PVAAKATAKPVKAPVKKPIAKKKG) form a disordered region. Residues 458–468 (PVKKPIAKKKG) are compositionally biased toward basic residues.

The protein belongs to the argininosuccinate synthase family. Type 1 subfamily. Homotetramer.

The protein localises to the cytoplasm. The enzyme catalyses L-citrulline + L-aspartate + ATP = 2-(N(omega)-L-arginino)succinate + AMP + diphosphate + H(+). The protein operates within amino-acid biosynthesis; L-arginine biosynthesis; L-arginine from L-ornithine and carbamoyl phosphate: step 2/3. This chain is Argininosuccinate synthase, found in Dechloromonas aromatica (strain RCB).